We begin with the raw amino-acid sequence, 297 residues long: MAGYATTPSPMQTLQEEAVCAICLDYFKDPVSISCGHNFCRGCVTQLWSKEDEEDQNEEEDEWEEEEDEEAVGAMDGWDGSIREVLYRGNADEELFQDQDDDELWLGDSGITNWDNVDYMWDEEEEEEEEDQDYYLGGLRPDLRIDVYREEEILEAYDEDEDEELYPDIHPPPSLPLPGQFTCPQCRKSFTRRSFRPNLQLANMVQIIRQMCPTPYRGNRSNDQGMCFKHQEALKLFCEVDKEAICVVCRESRSHKQHSVLPLEEVVQEYQEIKLETTLVGILQIEQESIHSKAYNQ.

An RING-type; degenerate zinc finger spans residues 20-62 (CAICLDYFKDPVSISCGHNFCRGCVTQLWSKEDEEDQNEEEDE). The tract at residues 72-167 (VGAMDGWDGS…DEDEDEELYP (96 aa)) is important for rapid proteolytic degradation by the proteasome. The B box-type zinc-finger motif lies at 222-263 (NDQGMCFKHQEALKLFCEVDKEAICVVCRESRSHKQHSVLPL). Zn(2+) contacts are provided by Cys-227, His-230, Cys-249, and His-255.

This sequence belongs to the TRIM/RBCC family. In terms of assembly, (Microbial infection) Interacts with Japanese encephalitis virus non-structural protein 2 (NS2A); mediates the ubiquitination of NS2A, targeting it for proteasome-mediated degradation. In terms of processing, autoubiquitinated. Polyubiquitinated. Undergoes extremely rapid proteolytic degradation by the proteasome.

The protein localises to the cytoplasm. It localises to the cytosol. Its subcellular location is the nucleus. It carries out the reaction S-ubiquitinyl-[E2 ubiquitin-conjugating enzyme]-L-cysteine + [acceptor protein]-L-lysine = [E2 ubiquitin-conjugating enzyme]-L-cysteine + N(6)-ubiquitinyl-[acceptor protein]-L-lysine.. It participates in protein modification; protein ubiquitination. In terms of biological role, E3 ubiquitin-protein ligase. Positively regulates the NF-kappa-B signaling pathway. Functionally, (Microbial infection) Exhibits antiviral activity against Japanese encephalitis virus (JEV). Ubiquitinates the viral non-structural protein 2 (NS2A) and targets it for proteasome-mediated degradation. The sequence is that of E3 ubiquitin-protein ligase TRIM52 (TRIM52) from Homo sapiens (Human).